The following is a 274-amino-acid chain: Protein TIFY 11A (274 aa).

2 disordered regions span residues 49–95 (SLAL…SQPG) and 139–176 (PIND…QEQN). In terms of domain architecture, Tify spans 92-127 (SQPGSSQLTIFFGGKVLVYNEFPVDKAKEIMEVAKQ). Residues 139–150 (PINDENNNNKSS) are compositionally biased toward polar residues. Positions 161–185 (DNNHLTKEQQQQQEQNQIVERIARR) form a coiled coil. Positions 182–206 (IARRASLHRFFAKRKDRAVARAPYQ) match the Jas motif. A Nuclear localization signal motif is present at residues 183-190 (ARRASLHR). Positions 206 to 274 (QVNQNAGHHR…QSSKDLDLRL (69 aa)) are disordered. Residues 249-274 (IKSDGDKDDIMKIEEGQSSKDLDLRL) show a composition bias toward basic and acidic residues.

It belongs to the TIFY/JAZ family. As to quaternary structure, homo- and heterodimer. Interacts with MYC2, MYC3, MYC4, AFPH2/NINJA, TIFY10A/JAZ1, TIFY10B/JAZ2, TIFY11B/JAZ6, TIFY5A/JAZ8 and TIFY3B/JAZ12. In terms of assembly, (Microbial infection) Interacts with the pathogenic Pseudomonas syringae HopZ1a protein. (Microbial infection) Acetylated by Pseudomonas syringae HopZ1a. In terms of processing, ubiquitinated. Targeted for degradation by the SCF(COI1) E3 ubiquitin ligase-proteasome pathway during jasmonate signaling.

Its subcellular location is the nucleus. Repressor of jasmonate responses. The chain is Protein TIFY 11A from Arabidopsis thaliana (Mouse-ear cress).